Here is a 510-residue protein sequence, read N- to C-terminus: 2-isopropylmalate synthase (510 aa).

A Pyruvate carboxyltransferase domain is found at 5 to 267 (LVIFDTTLRD…DTRIDTTQIV (263 aa)). The Mn(2+) site is built by Asp-14, His-202, His-204, and Asn-238. The interval 392–510 (RLLSLHAVSE…SSLERTHPQI (119 aa)) is regulatory domain.

It belongs to the alpha-IPM synthase/homocitrate synthase family. LeuA type 1 subfamily. In terms of assembly, homodimer. The cofactor is Mn(2+).

It localises to the cytoplasm. It catalyses the reaction 3-methyl-2-oxobutanoate + acetyl-CoA + H2O = (2S)-2-isopropylmalate + CoA + H(+). It participates in amino-acid biosynthesis; L-leucine biosynthesis; L-leucine from 3-methyl-2-oxobutanoate: step 1/4. In terms of biological role, catalyzes the condensation of the acetyl group of acetyl-CoA with 3-methyl-2-oxobutanoate (2-ketoisovalerate) to form 3-carboxy-3-hydroxy-4-methylpentanoate (2-isopropylmalate). This is 2-isopropylmalate synthase from Nitrosomonas europaea (strain ATCC 19718 / CIP 103999 / KCTC 2705 / NBRC 14298).